The following is a 620-amino-acid chain: Cell fusion protein cfr1 (620 aa).

Residues 79-169 (LPSPPVLKLK…KHITIKTLRM (91 aa)) form the Fibronectin type-III domain. The 90-residue stretch at 167–256 (LRMIDLTGIQ…RLVNVSGFYI (90 aa)) folds into the BRCT domain. Disordered stretches follow at residues 287-566 (QPKN…PEKA) and 588-620 (KQSSEPTADDNLIPNKEAEIIQSSDEFESVNID). The segment covering 303–314 (APQQTTQQGTQN) has biased composition (polar residues). Over residues 315–330 (SANAEPSSSASVPAEA) the composition is skewed to low complexity. The segment covering 352-375 (SKPNEAPTSSENIKADQPENSTKQ) has biased composition (polar residues). The span at 382–392 (MQIKDAEEHSN) shows a compositional bias: basic and acidic residues. The span at 393–406 (LESTPAAQQTSEVE) shows a compositional bias: polar residues. Residues 424 to 434 (NVNEENNTPET) are compositionally biased toward low complexity. Over residues 445-468 (NTAAESLINQEETTSGEAVTKSTV) the composition is skewed to polar residues. Positions 472–484 (ANEEEAEPNEIIE) are enriched in acidic residues. Residues 506–515 (NNANSENANG) are compositionally biased toward polar residues. Basic and acidic residues predominate over residues 517–537 (TDEKIIEAPLDTKENSDDDKP).

The protein belongs to the CHS5 family.

The protein resides in the golgi apparatus. Required for cell fusion, independently of fus1. Appears to have a role in transporting proteins that are involved in mating. May act as a scaffold to retain cell fusion proteins in the cisternae of the Golgi. Degraded at the onset of mating and this leads to release of cell fusion proteins. The chain is Cell fusion protein cfr1 (cfr1) from Schizosaccharomyces pombe (strain 972 / ATCC 24843) (Fission yeast).